Here is a 446-residue protein sequence, read N- to C-terminus: Nuclear envelope morphology protein 1 (446 aa).

Residues 53–80 are disordered; the sequence is VDQQYDHSSSHLKESDQNQERKNSVPKK. Basic and acidic residues predominate over residues 56-75; the sequence is QYDHSSSHLKESDQNQERKN. The helical transmembrane segment at 87-103 threads the bilayer; it reads ILIEKIASILWALLLFL. Residues 132–168 form a disordered region; that stretch reads HTDKRNRGSNASENELPVSSSNINDSSEKTNPKNCNL. A compositionally biased stretch (polar residues) spans 139 to 156; that stretch reads GSNASENELPVSSSNIND. Residues 247–424 form the FCP1 homology domain; that stretch reads NTQKKKKLVI…LNLLPFLEAM (178 aa).

The protein belongs to the Dullard family. As to quaternary structure, component of the NEM1-SPO7 complex.

It localises to the endoplasmic reticulum membrane. The protein localises to the nucleus membrane. The catalysed reaction is O-phospho-L-seryl-[protein] + H2O = L-seryl-[protein] + phosphate. It catalyses the reaction O-phospho-L-threonyl-[protein] + H2O = L-threonyl-[protein] + phosphate. Catalytic component of the NEM1-SPO7 complex which acts as a phosphatase and dephosphorylates the phosphatidic acid phosphohydrolase PAH1. Essential for the formation of a spherical nucleus and meiotic division. The NEM1-SPOo7 protein phosphatase is required for efficient mitophagy under prolonged respiration, as well as for reticulophagy and pexophagy. This Saccharomyces cerevisiae (strain ATCC 204508 / S288c) (Baker's yeast) protein is Nuclear envelope morphology protein 1 (NEM1).